A 278-amino-acid chain; its full sequence is Sulfur carrier protein FdhD (278 aa).

Residue C121 is the Cysteine persulfide intermediate of the active site. 260–265 (FCKPGR) is a Mo-bis(molybdopterin guanine dinucleotide) binding site.

This sequence belongs to the FdhD family.

The protein localises to the cytoplasm. Its function is as follows. Required for formate dehydrogenase (FDH) activity. Acts as a sulfur carrier protein that transfers sulfur from IscS to the molybdenum cofactor prior to its insertion into FDH. The polypeptide is Sulfur carrier protein FdhD (Salmonella paratyphi A (strain ATCC 9150 / SARB42)).